The chain runs to 66 residues: Large ribosomal subunit protein uL29 (66 aa).

The protein belongs to the universal ribosomal protein uL29 family.

This is Large ribosomal subunit protein uL29 from Borreliella afzelii (strain PKo) (Borrelia afzelii).